A 274-amino-acid chain; its full sequence is Serine/threonine-protein kinase 1 (274 aa).

One can recognise a Protein kinase domain in the interval 17 to 265 (ARTALHLVNG…YEVIQKNTYW (249 aa)). ATP is bound by residues 23-31 (LVNGKFGKV) and K46. The active-site Proton acceptor is D133.

The protein belongs to the protein kinase superfamily. Ser/Thr protein kinase family.

The enzyme catalyses L-seryl-[protein] + ATP = O-phospho-L-seryl-[protein] + ADP + H(+). It catalyses the reaction L-threonyl-[protein] + ATP = O-phospho-L-threonyl-[protein] + ADP + H(+). In terms of biological role, in vitro, can phosphorylate histone H1. This Lymantria dispar multicapsid nuclear polyhedrosis virus (LdMNPV) protein is Serine/threonine-protein kinase 1 (PK1).